Consider the following 384-residue polypeptide: Ceramide very long chain fatty acid hydroxylase SCS7 (384 aa).

Residues 1-197 are Cytoplasmic-facing; that stretch reads MSTNTSKTLE…NFLEPLTKTA (197 aa). One can recognise a Cytochrome b5 heme-binding domain in the interval 9 to 90; it reads LELFSKKTVQ…EDEYLIGYLA (82 aa). 2 residues coordinate heme: His-45 and His-72. The helical transmembrane segment at 198–216 threads the bilayer; sequence WWVVPVAWLPVVVYHMGVA. Over 217–221 the chain is Lumenal; that stretch reads LKNMN. The helical transmembrane segment at 222–246 threads the bilayer; the sequence is QLFACFLFCVGVFVWTLIEYGLHRF. 5 residues coordinate Zn(2+): His-244, His-249, His-268, His-271, and His-272. At 247 to 284 the chain is on the cytoplasmic side; the sequence is LFHFDDWLPESNIAFATHFLLHGCHHYLPMDKYRLVMP. Residues 285–302 form a helical membrane-spanning segment; the sequence is PTLFVILCAPFYKLVFAL. The Lumenal portion of the chain corresponds to 303–304; it reads LP. Residues 305 to 328 form a helical membrane-spanning segment; sequence LYWAYAGFAGGLFGYVCYDECHFF. Residues His-326, His-330, His-345, His-348, and His-349 each contribute to the Zn(2+) site. The Cytoplasmic segment spans residues 329-384; sequence LHHSKLPPFMRKLKKYHLEHHYKNYQLGFGVTSWFWDEVFGTYLGPDAPLSKMKYE.

The protein belongs to the sterol desaturase family. SCS7 subfamily. Requires Zn(2+) as cofactor.

Its subcellular location is the endoplasmic reticulum membrane. The enzyme catalyses an N-(1,2 saturated acyl)-(4R)-hydroxysphinganine + 2 Fe(II)-[cytochrome b5] + O2 + 2 H(+) = an N-(2R-hydroxyacyl)-4R-hydroxysphinganine + 2 Fe(III)-[cytochrome b5] + H2O. It catalyses the reaction an N-(1,2-saturated acyl)sphinganine + 2 Fe(II)-[cytochrome b5] + O2 + 2 H(+) = an N-[(2'R)-hydroxyacyl]sphinganine + 2 Fe(III)-[cytochrome b5] + H2O. It carries out the reaction N-hexacosanoyl-(4R)-hydroxysphinganine + 2 Fe(II)-[cytochrome b5] + O2 + 2 H(+) = N-(2-hydroxyhexacosanyl)-(4R)-hydroxysphinganine + 2 Fe(III)-[cytochrome b5] + H2O. The protein operates within sphingolipid metabolism. Functionally, ceramide hydroxylase involved in the hydroxylation of sphingolipid-associated very long chain fatty acids. Postulated to hydroxylate the very long chain fatty acid of dihydroceramides and phytoceramides at C-2. This chain is Ceramide very long chain fatty acid hydroxylase SCS7, found in Saccharomyces cerevisiae (strain ATCC 204508 / S288c) (Baker's yeast).